The sequence spans 611 residues: E-selectin (611 aa).

Residues 1–22 form the signal peptide; that stretch reads MITSQLLPALTLVLLLFKEGGA. The C-type lectin domain occupies 23–140; the sequence is WSYNASTEAM…CDKKKLALCY (118 aa). Topologically, residues 23–557 are extracellular; the sequence is WSYNASTEAM…CEAPTESSIP (535 aa). Asn-26 is a glycosylation site (N-linked (GlcNAc...) asparagine). 19 disulfide bridges follow: Cys-41–Cys-139, Cys-112–Cys-131, Cys-144–Cys-155, Cys-149–Cys-164, Cys-166–Cys-175, Cys-181–Cys-225, Cys-194–Cys-207, Cys-211–Cys-238, Cys-243–Cys-287, Cys-256–Cys-269, Cys-273–Cys-300, Cys-305–Cys-350, Cys-336–Cys-363, Cys-368–Cys-413, Cys-399–Cys-426, Cys-431–Cys-476, Cys-462–Cys-489, Cys-494–Cys-535, and Cys-521–Cys-548. Ca(2+)-binding residues include Glu-102, Asn-104, and Glu-110. A carbohydrate-binding positions include 102–110, 114–119, and 127–129; these read EPNNKQNDE, EIYIKR, and NDE. Ca(2+)-binding residues include Asn-127 and Asp-128. Residues 141 to 176 enclose the EGF-like domain; that stretch reads TAACTPTSCSGHGECVETVNNYTCKCHPGFRGLRCE. Asn-161 carries N-linked (GlcNAc...) asparagine glycosylation. 2 Sushi domains span residues 179–240 and 241–302; these read VTCQ…ACNV and VECS…TCKA. A glycan (N-linked (GlcNAc...) asparagine) is linked at Asn-204. N-linked (GlcNAc...) asparagine glycosylation is present at Asn-266. Residues Asn-313 and Asn-333 are each glycosylated (N-linked (GlcNAc...) asparagine). Sushi domains lie at 316–365, 367–428, 430–491, and 492–550; these read VSCS…VCKA, QCKA…TCEA, KCDA…SCQV, and VQCF…TCEA. N-linked (GlcNAc...) asparagine glycosylation is present at Asn-528. The helical transmembrane segment at 558–579 threads the bilayer; that stretch reads LAVGLTAGGTSLLTVASFLLWL. The Cytoplasmic segment spans residues 580–611; it reads LKRLRKRAKKFVPASSCQSLQSDGSYHMPCSI.

This sequence belongs to the selectin/LECAM family. As to quaternary structure, interacts with SELPLG/PSGL1 and PODXL2 through the sialyl Lewis X epitope. SELPLG sulfation appears not to be required for this interaction.

The protein resides in the cell membrane. In terms of biological role, cell-surface glycoprotein having a role in immunoadhesion. Mediates in the adhesion of blood neutrophils in cytokine-activated endothelium through interaction with SELPLG/PSGL1. May have a role in capillary morphogenesis. In Canis lupus familiaris (Dog), this protein is E-selectin (SELE).